A 223-amino-acid polypeptide reads, in one-letter code: MRGLFITGTDTGVGKTEVTCALVANARAAGLDAVPMKPAQSGVAPGEPTDADRLHAACDGAEPLEVLCPYSFAAPLAPAVAARLEGRQVSFGAIVDGVRALAARHEAVLVEGAGGLLVPLTEEETYADLAVALGLSVLVVARAGLGTVNHTALTVEALRARGLVLTAIVLNQACETDDPSVPYNPAEIARVTGREPLARLAHVRDIAERQRFLRSRLAGKIQF.

Residue T16 coordinates Mg(2+). Residue K37 is part of the active site. Position 41 (S41) interacts with substrate. Mg(2+)-binding residues include D50 and E111. Residues D50, E111 to G114, N171 to Q172, A201 to V203, and E208 contribute to the ATP site.

This sequence belongs to the dethiobiotin synthetase family. Homodimer. Mg(2+) serves as cofactor.

Its subcellular location is the cytoplasm. The catalysed reaction is (7R,8S)-7,8-diammoniononanoate + CO2 + ATP = (4R,5S)-dethiobiotin + ADP + phosphate + 3 H(+). It functions in the pathway cofactor biosynthesis; biotin biosynthesis; biotin from 7,8-diaminononanoate: step 1/2. Its function is as follows. Catalyzes a mechanistically unusual reaction, the ATP-dependent insertion of CO2 between the N7 and N8 nitrogen atoms of 7,8-diaminopelargonic acid (DAPA, also called 7,8-diammoniononanoate) to form a ureido ring. The polypeptide is ATP-dependent dethiobiotin synthetase BioD (Anaeromyxobacter sp. (strain Fw109-5)).